The chain runs to 210 residues: ATP-dependent Clp protease proteolytic subunit (210 aa).

Serine 106 serves as the catalytic Nucleophile. Residue histidine 131 is part of the active site.

The protein belongs to the peptidase S14 family. As to quaternary structure, fourteen ClpP subunits assemble into 2 heptameric rings which stack back to back to give a disk-like structure with a central cavity, resembling the structure of eukaryotic proteasomes.

It localises to the cytoplasm. It catalyses the reaction Hydrolysis of proteins to small peptides in the presence of ATP and magnesium. alpha-casein is the usual test substrate. In the absence of ATP, only oligopeptides shorter than five residues are hydrolyzed (such as succinyl-Leu-Tyr-|-NHMec, and Leu-Tyr-Leu-|-Tyr-Trp, in which cleavage of the -Tyr-|-Leu- and -Tyr-|-Trp bonds also occurs).. In terms of biological role, cleaves peptides in various proteins in a process that requires ATP hydrolysis. Has a chymotrypsin-like activity. Plays a major role in the degradation of misfolded proteins. In Bartonella tribocorum (strain CIP 105476 / IBS 506), this protein is ATP-dependent Clp protease proteolytic subunit.